We begin with the raw amino-acid sequence, 465 residues long: Ribulose bisphosphate carboxylase large chain (465 aa).

K4 carries the post-translational modification N6,N6,N6-trimethyllysine. Residues N113 and T163 each coordinate substrate. K165 acts as the Proton acceptor in catalysis. Position 167 (K167) interacts with substrate. Mg(2+)-binding residues include K191, D193, and E194. K191 carries the post-translational modification N6-carboxylysine. The active-site Proton acceptor is H284. Residues R285, H317, and S369 each coordinate substrate.

The protein belongs to the RuBisCO large chain family. Type I subfamily. Heterohexadecamer of 8 large chains and 8 small chains; disulfide-linked. The disulfide link is formed within the large subunit homodimers. Mg(2+) is required as a cofactor. Post-translationally, the disulfide bond which can form in the large chain dimeric partners within the hexadecamer appears to be associated with oxidative stress and protein turnover.

It is found in the plastid. Its subcellular location is the chloroplast. It catalyses the reaction 2 (2R)-3-phosphoglycerate + 2 H(+) = D-ribulose 1,5-bisphosphate + CO2 + H2O. It carries out the reaction D-ribulose 1,5-bisphosphate + O2 = 2-phosphoglycolate + (2R)-3-phosphoglycerate + 2 H(+). In terms of biological role, ruBisCO catalyzes two reactions: the carboxylation of D-ribulose 1,5-bisphosphate, the primary event in carbon dioxide fixation, as well as the oxidative fragmentation of the pentose substrate in the photorespiration process. Both reactions occur simultaneously and in competition at the same active site. The sequence is that of Ribulose bisphosphate carboxylase large chain from Morus rubra (Red mulberry).